Reading from the N-terminus, the 403-residue chain is RUN domain-containing protein 3B (403 aa).

A disordered region spans residues 1-20 (MASRSLGGLSGSRGGGKKSL). Arginine 13 carries the post-translational modification Omega-N-methylarginine. The 133-residue stretch at 53-185 (DDSSPEFNNF…IDFSFCLKGE (133 aa)) folds into the RUN domain. Positions 207–232 (SDSISSDEEELRTFGSSDSEGSTPEN) are disordered. Serine 211 and serine 212 each carry phosphoserine. Positions 220–231 (FGSSDSEGSTPE) are enriched in polar residues. Residues 296–321 (AHKLEKEQLEYIIVELQDQLKSYQSL) are a coiled coil.

It belongs to the RUNDC3 family. Interacts with RAP2A.

The polypeptide is RUN domain-containing protein 3B (Rundc3b) (Rattus norvegicus (Rat)).